Consider the following 30-residue polypeptide: MTLSLINRSTACIQAVEQKYCRVPLPENNR.

This is an uncharacterized protein from Saccharomyces cerevisiae (strain ATCC 204508 / S288c) (Baker's yeast).